A 148-amino-acid chain; its full sequence is MKIILTHEVSGLGAAGDVVDVKDGYARNYLIPRNFAIRWTKGGEKDVEQIRRARKIHEIQTIEQANEIKARLEGVKVRLAVRSGDAGRLFGSVTPADVASAIKASGGPEVDKRRIELGSPIKTLGAHETSVRLHPEVAAKVNIEVVAA.

It belongs to the bacterial ribosomal protein bL9 family.

In terms of biological role, binds to the 23S rRNA. This Streptomyces avermitilis (strain ATCC 31267 / DSM 46492 / JCM 5070 / NBRC 14893 / NCIMB 12804 / NRRL 8165 / MA-4680) protein is Large ribosomal subunit protein bL9.